The following is a 617-amino-acid chain: Proline--tRNA ligase (617 aa).

The protein belongs to the class-II aminoacyl-tRNA synthetase family. ProS type 1 subfamily. In terms of assembly, homodimer.

The protein resides in the cytoplasm. It catalyses the reaction tRNA(Pro) + L-proline + ATP = L-prolyl-tRNA(Pro) + AMP + diphosphate. In terms of biological role, catalyzes the attachment of proline to tRNA(Pro) in a two-step reaction: proline is first activated by ATP to form Pro-AMP and then transferred to the acceptor end of tRNA(Pro). As ProRS can inadvertently accommodate and process non-cognate amino acids such as alanine and cysteine, to avoid such errors it has two additional distinct editing activities against alanine. One activity is designated as 'pretransfer' editing and involves the tRNA(Pro)-independent hydrolysis of activated Ala-AMP. The other activity is designated 'posttransfer' editing and involves deacylation of mischarged Ala-tRNA(Pro). The misacylated Cys-tRNA(Pro) is not edited by ProRS. This chain is Proline--tRNA ligase, found in Streptococcus pneumoniae (strain ATCC BAA-255 / R6).